The primary structure comprises 440 residues: uncharacterized protein (440 aa).

A signal peptide spans 1 to 17 (MDRFFCTVWVWSVLFGA). C18 carries the N-palmitoyl cysteine lipid modification. A lipid anchor (S-diacylglycerol cysteine) is attached at C18. The tract at residues 241-268 (SALQERPSSPEPVVSTIPSPEGEENSAA) is disordered.

Its subcellular location is the cell membrane. This is an uncharacterized protein from Treponema pallidum (strain Nichols).